A 133-amino-acid polypeptide reads, in one-letter code: Sporulation-specific protein 2 (133 aa).

It belongs to the VPS13 family. Interacts with spo13 and spo15.

It localises to the cytoplasm. The protein localises to the cytoskeleton. It is found in the microtubule organizing center. Its subcellular location is the spindle pole body. Involved in sporulation. Plays a significant role in modification of the spindle pole body prior to spore formation and is required for initiating forespore membrane formation. Assists in the localization of spo13 to the outer surface of the SPB. This chain is Sporulation-specific protein 2 (spo2), found in Schizosaccharomyces pombe (strain 972 / ATCC 24843) (Fission yeast).